The following is a 702-amino-acid chain: Dynein axonemal intermediate chain 1 (702 aa).

Positions 1–58 are disordered; sequence MLPASSKMPHKQPPPPRKQSISMGRGARKRDEDSGTEVGEGTDEWVQSKATVKPPDQL. Phosphoserine occurs at positions 134 and 137. 5 WD repeats span residues 383 to 423, 432 to 475, 540 to 580, 582 to 622, and 630 to 669; these read SSES…SQPS, KHTD…LVHT, AHNM…PMFI, DLNS…YEAI, and KKKN…RKMP.

Belongs to the dynein intermediate chain family. As to quaternary structure, consists of at least two heavy chains and a number of intermediate and light chains. Interacts with BICD2. Interacts with CFAP45 and CFAP52. Interacts with CFAP53.

The protein localises to the cytoplasm. The protein resides in the cytoskeleton. Its subcellular location is the cilium axoneme. Part of the dynein complex of respiratory cilia. The sequence is that of Dynein axonemal intermediate chain 1 (DNAI1) from Bos taurus (Bovine).